An 89-amino-acid chain; its full sequence is Small ribosomal subunit protein uS15 (89 aa).

Belongs to the universal ribosomal protein uS15 family. As to quaternary structure, part of the 30S ribosomal subunit. Forms a bridge to the 50S subunit in the 70S ribosome, contacting the 23S rRNA.

Its function is as follows. One of the primary rRNA binding proteins, it binds directly to 16S rRNA where it helps nucleate assembly of the platform of the 30S subunit by binding and bridging several RNA helices of the 16S rRNA. In terms of biological role, forms an intersubunit bridge (bridge B4) with the 23S rRNA of the 50S subunit in the ribosome. The sequence is that of Small ribosomal subunit protein uS15 from Haemophilus influenzae (strain PittGG).